Reading from the N-terminus, the 318-residue chain is MAGLKRRASQVWPEERVEQEHGLYSLHRMFDIVGTHLTHRDVRVLSFLFVDVIDDHERGLIRNGRDFLLALERQGRCDESNFRQVLQLLRIITRHDLLPYVTLKKRRAVCPDLVDKYLEETSIRYVTPRALSDPEPRPPQPSKTVPPHYPVVCCPTSGSQMCSKRPARGRTTLGSQRKRRKSVTPDPKEKQTCDIRLRVRAEYCQHETALQGNVFSNKQDPLERQFERFNQANTILKSRDLGSIICDIKFSELTYLDAFWRDYINGSLLEALKGVFITDSLKQAVGHEAIKLLVNVDEEDYELGRQKLLRNLMLQALP.

A DED domain is found at serine 25–leucine 103. Residues proline 128–glutamine 191 form a disordered region.

In terms of assembly, interacts with CASP8, CASP10, KRT8, KRT18, CASP3 and FADD. Homodimerizes and heterodimerizes with DEDD2. In terms of processing, exists predominantly in a mono- or diubiquitinated form. As to expression, widely expressed with highest levels in testis. Within the testis, highly expressed in germ cells but not expressed in Sertoli cells.

It is found in the cytoplasm. The protein resides in the nucleus. The protein localises to the nucleolus. A scaffold protein that directs CASP3 to certain substrates and facilitates their ordered degradation during apoptosis. May also play a role in mediating CASP3 cleavage of KRT18. Regulates degradation of intermediate filaments during apoptosis. May play a role in the general transcription machinery in the nucleus and might be an important regulator of the activity of GTF3C3. Inhibits DNA transcription in vitro. The protein is Death effector domain-containing protein (Dedd) of Rattus norvegicus (Rat).